Reading from the N-terminus, the 109-residue chain is Meiotically up-regulated gene 153 protein (109 aa).

The protein localises to the mitochondrion. In terms of biological role, has a role in meiosis. In Schizosaccharomyces pombe (strain 972 / ATCC 24843) (Fission yeast), this protein is Meiotically up-regulated gene 153 protein (mug153).